We begin with the raw amino-acid sequence, 482 residues long: GDP-D-glucose phosphorylase 1 (482 aa).

The segment at 1–21 (MEPFPRILDDRLPRNMRRPRP) is disordered. Histidine 255 (tele-GMP-histidine intermediate) is an active-site residue. A disordered region spans residues 461-482 (MPRSPSIRHRSSTRAQSDEGSK).

This sequence belongs to the GDPGP1 family. As to expression, expressed throughout the neuronal system, in the spermatheca and anterior hypodermal cells.

The protein localises to the cytoplasm. The catalysed reaction is GDP-alpha-D-glucose + phosphate = alpha-D-glucose 1-phosphate + GDP + H(+). Functionally, specific and highly efficient GDP-D-glucose phosphorylase regulating the levels of GDP-D-glucose in cells. The polypeptide is GDP-D-glucose phosphorylase 1 (Caenorhabditis elegans).